The following is a 198-amino-acid chain: Na(+)-translocating NADH-quinone reductase subunit E (198 aa).

6 consecutive transmembrane segments (helical) span residues 11-31 (SVFI…FLAV), 35-55 (VSTA…AVPA), 77-97 (FLNF…LEMI), 110-130 (GIFL…SFMV), 140-160 (VVYG…LAGL), and 176-196 (LGIT…FSGI).

Belongs to the NqrDE/RnfAE family. As to quaternary structure, composed of six subunits; NqrA, NqrB, NqrC, NqrD, NqrE and NqrF.

It is found in the cell inner membrane. The catalysed reaction is a ubiquinone + n Na(+)(in) + NADH + H(+) = a ubiquinol + n Na(+)(out) + NAD(+). NQR complex catalyzes the reduction of ubiquinone-1 to ubiquinol by two successive reactions, coupled with the transport of Na(+) ions from the cytoplasm to the periplasm. NqrA to NqrE are probably involved in the second step, the conversion of ubisemiquinone to ubiquinol. In Actinobacillus pleuropneumoniae serotype 5b (strain L20), this protein is Na(+)-translocating NADH-quinone reductase subunit E.